The sequence spans 520 residues: Protein U4 (520 aa).

This sequence belongs to the herpesviridae U4 family.

In Elephantid herpesvirus 1 (isolate Asian elephant/Berlin/Kiba/1998) (EIHV-1), this protein is Protein U4.